We begin with the raw amino-acid sequence, 801 residues long: Phosphorus acquisition-controlling protein (801 aa).

Disordered stretches follow at residues 292-317 (GSSP…DLAR), 366-607 (APSQ…SAGA), 628-725 (NTVP…ASTV), and 756-801 (MKMQ…AMDE). The span at 374-386 (PLTPLIPTSSSST) shows a compositional bias: low complexity. 2 stretches are compositionally biased toward polar residues: residues 387 to 401 (AGVT…SPEN) and 459 to 472 (KLSS…SVVG). The interval 446-540 (PGIASPATPA…PPSPAVAKPL (95 aa)) is interaction with negative regulatory factor. The span at 477–486 (DPMDPDHIEN) shows a compositional bias: basic and acidic residues. The span at 535–554 (AVAKPLALPSAALSSPQLKP) shows a compositional bias: low complexity. A compositionally biased stretch (polar residues) spans 637 to 646 (SELSTNLTSK). The bHLH domain maps to 645 to 735 (SKRTSHKIAE…EMAIEYIKQL (91 aa)). Over residues 676–687 (PAKEGGDGDGDG) the composition is skewed to basic and acidic residues. Positions 690–699 (SSGGGGGSGG) are enriched in gly residues. A compositionally biased stretch (basic and acidic residues) spans 700–713 (ADREDKREKDKDKA). Residues 765-777 (GSGSSVGDAGDLG) show a composition bias toward low complexity.

As to quaternary structure, binds DNA as a dimer.

The protein localises to the nucleus. Functionally, factor that activates the transcription of structural genes for phosphorus acquisition. In Neurospora crassa (strain ATCC 24698 / 74-OR23-1A / CBS 708.71 / DSM 1257 / FGSC 987), this protein is Phosphorus acquisition-controlling protein (nuc-1).